Here is a 131-residue protein sequence, read N- to C-terminus: Bacteriohemerythrin (131 aa).

Fe cation-binding residues include His22, His58, Glu62, His77, His81, His117, and Asp122.

Belongs to the hemerythrin family. As to quaternary structure, monomer.

Its function is as follows. Oxygen-binding protein. May be involved in a storage mechanism or for delivery to oxygen-requiring enzymes. The oxygen-binding site contains two iron atoms. This chain is Bacteriohemerythrin, found in Methylococcus capsulatus (strain ATCC 33009 / NCIMB 11132 / Bath).